A 943-amino-acid chain; its full sequence is UvrABC system protein A (943 aa).

32–39 (GLSGSGKS) contacts ATP. Residues 251–278 (CPVCGFTVPELEPRLFSFNAPFGSCSEC) form a C4-type zinc finger. ABC transporter domains lie at 308-589 (WNPI…SKSI) and 609-937 (GNGR…HYLK). An ATP-binding site is contributed by 641–648 (GVSGSGKS). Residues 740 to 766 (CEACSGDGIIKIEMHFLPDVYVACEVC) form a C4-type zinc finger.

It belongs to the ABC transporter superfamily. UvrA family. As to quaternary structure, forms a heterotetramer with UvrB during the search for lesions.

It is found in the cytoplasm. In terms of biological role, the UvrABC repair system catalyzes the recognition and processing of DNA lesions. UvrA is an ATPase and a DNA-binding protein. A damage recognition complex composed of 2 UvrA and 2 UvrB subunits scans DNA for abnormalities. When the presence of a lesion has been verified by UvrB, the UvrA molecules dissociate. In Streptococcus pneumoniae serotype 4 (strain ATCC BAA-334 / TIGR4), this protein is UvrABC system protein A.